The primary structure comprises 294 residues: Glycine--tRNA ligase alpha subunit (294 aa).

It belongs to the class-II aminoacyl-tRNA synthetase family. As to quaternary structure, tetramer of two alpha and two beta subunits.

It localises to the cytoplasm. The catalysed reaction is tRNA(Gly) + glycine + ATP = glycyl-tRNA(Gly) + AMP + diphosphate. This chain is Glycine--tRNA ligase alpha subunit, found in Trichormus variabilis (strain ATCC 29413 / PCC 7937) (Anabaena variabilis).